Reading from the N-terminus, the 693-residue chain is Polyribonucleotide nucleotidyltransferase (693 aa).

Residues Asp-485 and Asp-491 each coordinate Mg(2+). In terms of domain architecture, KH spans Pro-552–Ile-611. An S1 motif domain is found at Gly-621–Lys-689.

Belongs to the polyribonucleotide nucleotidyltransferase family. It depends on Mg(2+) as a cofactor.

It is found in the cytoplasm. It catalyses the reaction RNA(n+1) + phosphate = RNA(n) + a ribonucleoside 5'-diphosphate. In terms of biological role, involved in mRNA degradation. Catalyzes the phosphorolysis of single-stranded polyribonucleotides processively in the 3'- to 5'-direction. The polypeptide is Polyribonucleotide nucleotidyltransferase (Chlamydia muridarum (strain MoPn / Nigg)).